The sequence spans 224 residues: MDDIYGIIPVSKFKECKTRLSPFLSEEERENLLKVMLKDVTDTLRKYTDKIIIISADEDVLNYAKSLNLSVLKENDNSNLNKALKQAMEYCKGKTKKVIIMPSDIPLIGKTNLKMVIDSSKQLDFIIIPSKGGGTNTIIMKPLAIRTKFGDFSYKEHVNAADRKNLNPQVHDSLFMALDVNTTEDLGEIIVHGENTETRRYLKELKINVESVHGSERLKVTRGS.

It belongs to the CofC family. Homodimer.

The catalysed reaction is (2S)-2-phospholactate + GTP + H(+) = (2S)-lactyl-2-diphospho-5'-guanosine + diphosphate. Its pathway is cofactor biosynthesis; coenzyme F420 biosynthesis. In terms of biological role, guanylyltransferase that catalyzes the activation of (2S)-2-phospholactate (2-PL) as (2S)-lactyl-2-diphospho-5'-guanosine, via the condensation of 2-PL with GTP. It is involved in the biosynthesis of coenzyme F420, a hydride carrier cofactor. This chain is 2-phospho-L-lactate guanylyltransferase, found in Methanobrevibacter smithii (strain ATCC 35061 / DSM 861 / OCM 144 / PS).